The chain runs to 105 residues: Thioredoxin (105 aa).

Residues 1–105 enclose the Thioredoxin domain; it reads MANNVTDSSF…SLLDWINKSI (105 aa). The cysteines at positions 30 and 33 are disulfide-linked.

The protein belongs to the thioredoxin family.

Component of the thioredoxin-thioredoxin reductase system. Participates in various redox reactions through the reversible oxidation of its active center dithiol to a disulfide and catalyzes dithiol-disulfide exchange reactions. In Rickettsia felis (strain ATCC VR-1525 / URRWXCal2) (Rickettsia azadi), this protein is Thioredoxin (trxA).